A 395-amino-acid polypeptide reads, in one-letter code: Elongation factor Tu (395 aa).

The tr-type G domain occupies 10 to 204 (KPHVNIGTIG…AVDEYIPTPQ (195 aa)). A G1 region spans residues 19-26 (GHVDHGKT). Residue 19–26 (GHVDHGKT) participates in GTP binding. Thr26 lines the Mg(2+) pocket. Residues 60–64 (GITIS) are G2. Positions 81-84 (DCPG) are G3. Residues 81–85 (DCPGH) and 136–139 (NKCD) contribute to the GTP site. The tract at residues 136–139 (NKCD) is G4. The interval 174-176 (SAL) is G5.

Belongs to the TRAFAC class translation factor GTPase superfamily. Classic translation factor GTPase family. EF-Tu/EF-1A subfamily. In terms of assembly, monomer.

It is found in the cytoplasm. The catalysed reaction is GTP + H2O = GDP + phosphate + H(+). GTP hydrolase that promotes the GTP-dependent binding of aminoacyl-tRNA to the A-site of ribosomes during protein biosynthesis. The chain is Elongation factor Tu from Anoxybacillus flavithermus (strain DSM 21510 / WK1).